A 66-amino-acid chain; its full sequence is Large ribosomal subunit protein uL29 (66 aa).

It belongs to the universal ribosomal protein uL29 family.

The sequence is that of Large ribosomal subunit protein uL29 from Borrelia garinii subsp. bavariensis (strain ATCC BAA-2496 / DSM 23469 / PBi) (Borreliella bavariensis).